Here is a 218-residue protein sequence, read N- to C-terminus: Ribose-5-phosphate isomerase A (218 aa).

Residues 28-31, 81-84, and 94-97 each bind substrate; these read TGST, DGAD, and KGGG. The active-site Proton acceptor is Glu103. Lys121 provides a ligand contact to substrate.

It belongs to the ribose 5-phosphate isomerase family. Homodimer.

It carries out the reaction aldehydo-D-ribose 5-phosphate = D-ribulose 5-phosphate. It functions in the pathway carbohydrate degradation; pentose phosphate pathway; D-ribose 5-phosphate from D-ribulose 5-phosphate (non-oxidative stage): step 1/1. Functionally, catalyzes the reversible conversion of ribose-5-phosphate to ribulose 5-phosphate. This chain is Ribose-5-phosphate isomerase A, found in Shewanella piezotolerans (strain WP3 / JCM 13877).